A 620-amino-acid chain; its full sequence is MAU2 chromatid cohesion factor homolog (620 aa).

3 TPR repeats span residues 90-123 (FDTASLLAQLYQQQEQSSLAKPVLRKAIELSQHN), 445-478 (GSFYYVQGLNAFHKSSFHEAKRFLRETLKMANAE), and 485-518 (SCSLVLLSHVFLSIGNSKESMNMVTPAMQLASKI).

It belongs to the SCC4/mau-2 family. Component of the cohesin loading complex.

The protein localises to the nucleus. Its subcellular location is the nucleoplasm. Its function is as follows. Required for association of the cohesin complex with chromatin during interphase. Plays a role in sister chromatid cohesion and normal progression through prometaphase. This chain is MAU2 chromatid cohesion factor homolog, found in Aedes aegypti (Yellowfever mosquito).